Reading from the N-terminus, the 231-residue chain is Cell cycle transcriptional regulator CtrA (231 aa).

One can recognise a Response regulatory domain in the interval 2–116 (RVLLIEDDSA…EMIARIHAVV (115 aa)). Position 51 is a 4-aspartylphosphate (D51). The ompR/PhoB-type DNA-binding region spans 124-223 (QSVIKTGDIV…VWGRGYVLRD (100 aa)).

Phosphorylated by CckA.

Forms part of a two-component regulatory system CtrA/CckA that controls multiple events in the cell cycle, including cell division, stalk synthesis and cell cycle-specific transcription. Binds to a group of cell cycle-regulated promoters critical for DNA replication, DNA methylation, and class II flagellar biogenesis. In Caulobacter vibrioides (strain ATCC 19089 / CIP 103742 / CB 15) (Caulobacter crescentus), this protein is Cell cycle transcriptional regulator CtrA (ctrA).